The chain runs to 681 residues: Propionyl-CoA carboxylase alpha chain (681 aa).

The Biotin carboxylation domain occupies 1-466 (MFNKILIANR…TTAFIAEEYP (466 aa)). ATP-binding positions include lysine 116, 148–209 (SNQI…PRHI), glutamate 200, and asparagine 235. In terms of domain architecture, ATP-grasp spans 120 to 317 (KKIAQEANVS…LVEQMIRVAA (198 aa)). Residues glutamate 275, glutamate 288, and asparagine 290 each coordinate Mg(2+). 3 residues coordinate Mn(2+): glutamate 275, glutamate 288, and asparagine 290. The active site involves glutamate 288. Phenylalanine 348 is a binding site for biotin. Positions 602-681 (LMPEKLPPDT…AVDDVIMEFE (80 aa)) constitute a Biotinyl-binding domain. Lysine 647 is subject to N6-biotinyllysine.

As to quaternary structure, the holoenzyme is a dodecamer composed of 6 PccA/alpha subunits and 6 PccB/beta subunits. Requires Mg(2+) as cofactor. It depends on Mn(2+) as a cofactor. Biotin serves as cofactor. In terms of processing, the biotin cofactor is covalently attached to the C-terminal biotinyl-binding domain and is required for the catalytic activity.

The catalysed reaction is propanoyl-CoA + hydrogencarbonate + ATP = (S)-methylmalonyl-CoA + ADP + phosphate + H(+). It functions in the pathway metabolic intermediate metabolism; propanoyl-CoA degradation; succinyl-CoA from propanoyl-CoA: step 1/3. Its function is as follows. This is one of the 2 subunits of the biotin-dependent propionyl-CoA carboxylase (PCC), the enzyme catalyzing the carboxylation of propionyl-CoA/propanoyl-CoA to D-methylmalonyl-CoA/(S)-methylmalonyl-CoA. Within the holoenzyme, the alpha subunit catalyzes the ATP-dependent carboxylation of the biotin carried by the biotin carboxyl carrier (BCC) domain, while the beta subunit then tranfers the carboxyl group from carboxylated biotin to propionyl-CoA. This is Propionyl-CoA carboxylase alpha chain from Ruegeria pomeroyi (strain ATCC 700808 / DSM 15171 / DSS-3) (Silicibacter pomeroyi).